The primary structure comprises 657 residues: ER degradation-enhancing alpha-mannosidase-like protein 1 (657 aa).

The Cytoplasmic portion of the chain corresponds to 1 to 4 (MQWR). A helical; Signal-anchor for type II membrane protein membrane pass occupies residues 5–25 (ALVLGLVLLRLGLHGVLWLVF). Residues 26–657 (GLGPSMGFYQ…RQIDQMVGLI (632 aa)) are Lumenal-facing. The disordered stretch occupies residues 48–94 (SPDGPASPTSGPVGRPGGVSGPSWLQPPGTGAAQSPRKAPRRPGPGM). N-linked (GlcNAc...) asparagine glycans are attached at residues asparagine 181, asparagine 198, asparagine 299, asparagine 342, and asparagine 624.

The protein belongs to the glycosyl hydrolase 47 family. As to quaternary structure, interacts with DNAJC10. Interacts with DERL2 and DERL3. Binds to SEL1L.

It is found in the endoplasmic reticulum membrane. In terms of biological role, extracts misfolded glycoproteins, but not glycoproteins undergoing productive folding, from the calnexin cycle. It is directly involved in endoplasmic reticulum-associated degradation (ERAD) and targets misfolded glycoproteins for degradation in an N-glycan-independent manner, probably by forming a complex with SEL1L. It has low mannosidase activity, catalyzing mannose trimming from Man8GlcNAc2 to Man7GlcNAc2. This chain is ER degradation-enhancing alpha-mannosidase-like protein 1 (EDEM1), found in Homo sapiens (Human).